Reading from the N-terminus, the 224-residue chain is Response regulator protein GraR (224 aa).

The region spanning 2–115 (QILLVEDDNT…VLIAKLQAIY (114 aa)) is the Response regulatory domain. A 4-aspartylphosphate modification is found at Asp51. Positions 126 to 224 (KRTLSWQDAT…KVGKGYLAHE (99 aa)) form a DNA-binding region, ompR/PhoB-type.

In terms of processing, phosphorylated by GraS.

The protein resides in the cytoplasm. Functionally, member of the two-component regulatory system GraR/GraS involved in resistance against cationic antimicrobial peptides (CAMPs). In Staphylococcus epidermidis (strain ATCC 35984 / DSM 28319 / BCRC 17069 / CCUG 31568 / BM 3577 / RP62A), this protein is Response regulator protein GraR (graR).